The sequence spans 67 residues: Small ribosomal subunit protein eS27 (67 aa).

Zn(2+) contacts are provided by cysteine 22, cysteine 25, cysteine 41, and cysteine 44. A C4-type zinc finger spans residues 22–44; it reads CPDCGNEQITFSHAAMVVRCLVC.

Belongs to the eukaryotic ribosomal protein eS27 family. In terms of assembly, part of the 30S ribosomal subunit. Requires Zn(2+) as cofactor.

This Pyrobaculum aerophilum (strain ATCC 51768 / DSM 7523 / JCM 9630 / CIP 104966 / NBRC 100827 / IM2) protein is Small ribosomal subunit protein eS27.